Here is a 298-residue protein sequence, read N- to C-terminus: Tyrosine recombinase XerD (298 aa).

A Core-binding (CB) domain is found at 2–87 (KQELARIEQF…AVRRLFQYLY (86 aa)). The Tyr recombinase domain maps to 108 to 292 (RLPKDLSEAQ…ATERLRQLHQ (185 aa)). Catalysis depends on residues arginine 148, lysine 172, histidine 244, arginine 247, and histidine 270. The active-site O-(3'-phospho-DNA)-tyrosine intermediate is the tyrosine 279.

The protein belongs to the 'phage' integrase family. XerD subfamily. As to quaternary structure, forms a cyclic heterotetrameric complex composed of two molecules of XerC and two molecules of XerD, in which XerC interacts with XerD via its C-terminal region, XerD interacts with XerC via its C-terminal region and so on.

The protein localises to the cytoplasm. FtsK may regulate the catalytic switch between XerC and XerD in the heterotetrameric complex during the two steps of the recombination process. Functionally, site-specific tyrosine recombinase, which acts by catalyzing the cutting and rejoining of the recombining DNA molecules. Binds cooperatively to specific DNA consensus sequences that are separated from XerC binding sites by a short central region, forming the heterotetrameric XerC-XerD complex that recombines DNA substrates. The complex is essential to convert dimers of the bacterial chromosome into monomers to permit their segregation at cell division. It also contributes to the segregational stability of plasmids. In the complex XerD specifically exchanges the bottom DNA strands. The chain is Tyrosine recombinase XerD from Shigella flexneri.